Consider the following 145-residue polypeptide: Small ribosomal subunit protein uS15 (145 aa).

This sequence belongs to the universal ribosomal protein uS15 family. As to quaternary structure, part of the 30S ribosomal subunit.

This Thermoplasma acidophilum (strain ATCC 25905 / DSM 1728 / JCM 9062 / NBRC 15155 / AMRC-C165) protein is Small ribosomal subunit protein uS15.